The sequence spans 249 residues: ATP synthase subunit a (249 aa).

A run of 6 helical transmembrane segments spans residues 26–46 (FTNV…FLYL), 84–104 (FFPF…IGLF), 114–134 (IIVT…YGFF), 143–163 (LFVP…IEII), 185–205 (ITLK…ALGI), and 208–228 (TVLP…VAFL).

Belongs to the ATPase A chain family. In terms of assembly, F-type ATPases have 2 components, CF(1) - the catalytic core - and CF(0) - the membrane proton channel. CF(1) has five subunits: alpha(3), beta(3), gamma(1), delta(1), epsilon(1). CF(0) has three main subunits: a(1), b(2) and c(9-12). The alpha and beta chains form an alternating ring which encloses part of the gamma chain. CF(1) is attached to CF(0) by a central stalk formed by the gamma and epsilon chains, while a peripheral stalk is formed by the delta and b chains.

It is found in the cell inner membrane. Its function is as follows. Key component of the proton channel; it plays a direct role in the translocation of protons across the membrane. This Brucella ovis (strain ATCC 25840 / 63/290 / NCTC 10512) protein is ATP synthase subunit a.